A 299-amino-acid polypeptide reads, in one-letter code: Tyrosine recombinase XerC (299 aa).

A Core-binding (CB) domain is found at 1 to 85 (MKRQLEAYCA…AVRGLYRYLN (85 aa)). A Tyr recombinase domain is found at 106 to 285 (RLPKVLDTDR…DFQHLAAVYD (180 aa)). Residues arginine 146, lysine 170, histidine 237, arginine 240, and histidine 263 contribute to the active site. Catalysis depends on tyrosine 272, which acts as the O-(3'-phospho-DNA)-tyrosine intermediate.

Belongs to the 'phage' integrase family. XerC subfamily. As to quaternary structure, forms a cyclic heterotetrameric complex composed of two molecules of XerC and two molecules of XerD.

It is found in the cytoplasm. Site-specific tyrosine recombinase, which acts by catalyzing the cutting and rejoining of the recombining DNA molecules. The XerC-XerD complex is essential to convert dimers of the bacterial chromosome into monomers to permit their segregation at cell division. It also contributes to the segregational stability of plasmids. This Pseudomonas putida (strain ATCC 47054 / DSM 6125 / CFBP 8728 / NCIMB 11950 / KT2440) protein is Tyrosine recombinase XerC.